A 352-amino-acid polypeptide reads, in one-letter code: Dysbindin (352 aa).

Residue Ser-11 is modified to Phosphoserine. Residues 88–176 adopt a coiled-coil conformation; that stretch reads EKKRTSLNEL…EAFKAELDTE (89 aa). The tract at residues 173-325 is dysbindin; sequence LDTEHTQKAL…DEEEVQVDTA (153 aa). The short motif at 243-256 is the Nuclear export signal element; that stretch reads LMDISDQEALDVFL. Positions 267-352 are disordered; it reads SPGVEMESNP…SDQCDSTQDI (86 aa). Over residues 274-285 the composition is skewed to polar residues; sequence SNPNQNEMSLQI. Over residues 286–301 the composition is skewed to low complexity; sequence PSPSESASQPPASPSA. 3 positions are modified to phosphoserine: Ser-315, Ser-340, and Ser-343.

It belongs to the dysbindin family. In terms of assembly, interacts with AP3M1 and TRIM32. Interacts (isoform 1 and isoform 2 only) with the DNA-dependent protein kinase complex DNA-PK; the interaction phosphorylates DTNBP1 in vitro. Interacts directly in this complex with XRCC5 and XRCC6. Interacts with XPO1; the interaction exports DTNBP1 out of the nucleus. Component of the biogenesis of lysosome-related organelles complex 1 (BLOC-1) composed of BLOC1S1, BLOC1S2, BLOC1S3, BLOC1S4, BLOC1S5, BLOC1S6, DTNBP1/BLOC1S7 and SNAPIN/BLOC1S8. The BLOC-1 complex associates with the AP-3 protein complex and membrane protein cargos. This BLOC-1 complex also associates with the BLOC-2 complex in endosomes. Binds to DTNA and DTNB but may not be a physiological binding partner. Interacts (via its coiled coil domain) with KXD1. Interacts with AP3B2, BLOC1S5, BLOC1S6, CMYA5, PI4K2, RNF151 and SNAPIN/BLOC1S8. Interacts with XPO1; the interaction exports DTNBP1 out of the nucleus. In terms of processing, ubiquitinated by TRIM32. Ubiquitination leads to DTNBP1 degradation. Detected in brain, in hippocampus and dentate gyrus neurons. Detected at axon bundles and axon terminals, notably in the cerebellum and hippocampus. Detected in neuropil in hippocampus, lateral septum, basal ganglia and substantia nigra. Highly expressed in pyramidal cells of hippocampus CA2 and CA3. Detected at the heart and skeletal muscle sarcolemma (at protein level). Ubiquitously expressed. The highest expression is observed in testis, liver, kidney, brain, heart and lung. Expressed at lower levels in stomach and small intestine.

It localises to the cytoplasm. The protein localises to the cytoplasmic vesicle membrane. It is found in the endosome membrane. Its subcellular location is the melanosome membrane. The protein resides in the postsynaptic density. It localises to the endoplasmic reticulum. The protein localises to the nucleus. It is found in the cytoplasmic vesicle. Its subcellular location is the secretory vesicle. The protein resides in the synaptic vesicle membrane. It localises to the postsynaptic cell membrane. Functionally, component of the BLOC-1 complex, a complex that is required for normal biogenesis of lysosome-related organelles (LRO), such as platelet dense granules and melanosomes. In concert with the AP-3 complex, the BLOC-1 complex is required to target membrane protein cargos into vesicles assembled at cell bodies for delivery into neurites and nerve terminals. The BLOC-1 complex, in association with SNARE proteins, is also proposed to be involved in neurite extension. Associates with the BLOC-2 complex to facilitate the transport of TYRP1 independent of AP-3 function. Plays a role in synaptic vesicle trafficking and in neurotransmitter release. Plays a role in the regulation of cell surface exposure of DRD2. May play a role in actin cytoskeleton reorganization and neurite outgrowth. May modulate MAPK8 phosphorylation. Appears to promote neuronal transmission and viability through regulating the expression of SNAP25 and SYN1, modulating PI3-kinase-Akt signaling and influencing glutamatergic release. Regulates the expression of SYN1 through binding to its promoter. Modulates prefrontal cortical activity via the dopamine/D2 pathway. In Mus musculus (Mouse), this protein is Dysbindin (Dtnbp1).